We begin with the raw amino-acid sequence, 236 residues long: MQQNTNVDPLEIAKFERMAETWWDLNGEFKPLHLLNPLRLNYIDQTAGGIFGKKVLDVGCGGGILSESMARIGAIVHGLDMGEEPLEVARLHALETGVSINYVKNTAEAHREEHREYYDVVTCMEMLEHVPDPQSVIQACCDMVKPGGFVFFSTINRNIKSFVETIIGAEYLLKMLPIGTHDHNKFIKPSELMALVDNTDLLCKDALGITYNPLTGIFKYTPKVDVNYMIATQKVD.

S-adenosyl-L-methionine-binding residues include Arg39, Gly59, Asp80, and Met124.

The protein belongs to the methyltransferase superfamily. UbiG/COQ3 family.

It catalyses the reaction a 3-demethylubiquinol + S-adenosyl-L-methionine = a ubiquinol + S-adenosyl-L-homocysteine + H(+). The catalysed reaction is a 3-(all-trans-polyprenyl)benzene-1,2-diol + S-adenosyl-L-methionine = a 2-methoxy-6-(all-trans-polyprenyl)phenol + S-adenosyl-L-homocysteine + H(+). It functions in the pathway cofactor biosynthesis; ubiquinone biosynthesis. O-methyltransferase that catalyzes the 2 O-methylation steps in the ubiquinone biosynthetic pathway. In Shewanella sp. (strain ANA-3), this protein is Ubiquinone biosynthesis O-methyltransferase.